A 609-amino-acid chain; its full sequence is MCGIFGYLGSKLAIPVVLDGLAKLEYRGYDSAGLASIHLGDLFVRKTIGRVDELRHSLEQENIQSLLAIGHTRWATHGVPTVSNAHPHVDENRTCAVVHNGIIENFKELKSFLLSEGVSFSSDTDSEVIAQLFAYRYQTTADLIHSFSWTLSQLQGSFSCGLIHKDHPDVLLCAAQESPLILGLGEGENFIASDSRAFLKHTQSIQALASGELAIVGLGHEVETYNFALKRISKPVRQVTYTDAGSDKQGYSYYMLKEIYEQPEVLERLVHKYLDPQGHISEKFLQGFPLEDFDEISIVACGSSYHAGFLAKYIIESLVSIPVHVEVASEFRYRRAYIGQKTLAILISQSGETADTLAALKEFRRRQVSCVLGICNVEESALATGVDHCLFLEAGIEIGVASTKAFTAQLLLLILLGLKLTISKHTLSLTEHCACGKGLLELPELCNRLLANENLHSWAHTYCNEDRFIFLGRRLMYPICMEAALKLKEIAYVEANCYPAGEMKHGPIALISKGSPVITFCGDSTVYEKMVGCIMEVKARQAHVIAVASEAQEDIAAVSDFQIYVPNSHSLASPILYTIVGQIMAYTMALKKGNEIDCPRNLAKSVTVE.

The active-site Nucleophile; for GATase activity is Cys-2. The Glutamine amidotransferase type-2 domain occupies Cys-2–Gly-219. SIS domains are found at residues Ile-280–Thr-426 and Trp-458–Pro-599. Residue Lys-604 is the For Fru-6P isomerization activity of the active site.

As to quaternary structure, homodimer.

The protein resides in the cytoplasm. The catalysed reaction is D-fructose 6-phosphate + L-glutamine = D-glucosamine 6-phosphate + L-glutamate. Functionally, catalyzes the first step in hexosamine metabolism, converting fructose-6P into glucosamine-6P using glutamine as a nitrogen source. In Chlamydia abortus (strain DSM 27085 / S26/3) (Chlamydophila abortus), this protein is Glutamine--fructose-6-phosphate aminotransferase [isomerizing].